Consider the following 514-residue polypeptide: GTPase Obg (514 aa).

The Obg domain maps to 2–159; sequence ATFVDRVTVH…GDILLELKTV (158 aa). The disordered stretch occupies residues 62–88; sequence RRPHRSSGNGGFGMGDHRSGHTGEDLE. A compositionally biased stretch (basic and acidic residues) spans 76 to 85; sequence GDHRSGHTGE. The region spanning 160 to 336 is the OBG-type G domain; it reads ADIALVGYPS…LSFALAELVE (177 aa). Residues 166 to 173, 191 to 195, 212 to 215, 288 to 291, and 317 to 319 contribute to the GTP site; these read GYPSAGKS, FTTLH, DVPG, NKID, and STV. 2 residues coordinate Mg(2+): Ser-173 and Thr-193. The OCT domain maps to 356 to 440; sequence PKTVDDSGFV…ENGVVFDWEP (85 aa).

It belongs to the TRAFAC class OBG-HflX-like GTPase superfamily. OBG GTPase family. Monomer. Mg(2+) serves as cofactor.

The protein localises to the cytoplasm. An essential GTPase which binds GTP, GDP and possibly (p)ppGpp with moderate affinity, with high nucleotide exchange rates and a fairly low GTP hydrolysis rate. Plays a role in control of the cell cycle, stress response, ribosome biogenesis and in those bacteria that undergo differentiation, in morphogenesis control. The protein is GTPase Obg of Leifsonia xyli subsp. xyli (strain CTCB07).